The following is a 445-amino-acid chain: Phosphoglucosamine mutase (445 aa).

Residue serine 102 is the Phosphoserine intermediate of the active site. Residues serine 102, aspartate 241, aspartate 243, and aspartate 245 each coordinate Mg(2+). Serine 102 bears the Phosphoserine mark.

Belongs to the phosphohexose mutase family. Mg(2+) serves as cofactor. Activated by phosphorylation.

It carries out the reaction alpha-D-glucosamine 1-phosphate = D-glucosamine 6-phosphate. In terms of biological role, catalyzes the conversion of glucosamine-6-phosphate to glucosamine-1-phosphate. This chain is Phosphoglucosamine mutase, found in Shewanella sp. (strain ANA-3).